The primary structure comprises 447 residues: GTPase Der (447 aa).

EngA-type G domains are found at residues 3–167 (PVIA…FAER) and 181–354 (TRIA…AAAM). GTP contacts are provided by residues 9–16 (GRPNVGKS), 56–60 (DTGGF), 119–122 (NKAE), 187–194 (GRPNVGKS), 234–238 (DTAGL), and 299–302 (NKWD). The KH-like domain occupies 355-439 (VKLPTPKLTR…PLRIEFRTNK (85 aa)).

Belongs to the TRAFAC class TrmE-Era-EngA-EngB-Septin-like GTPase superfamily. EngA (Der) GTPase family. In terms of assembly, associates with the 50S ribosomal subunit.

In terms of biological role, GTPase that plays an essential role in the late steps of ribosome biogenesis. In Ralstonia nicotianae (strain ATCC BAA-1114 / GMI1000) (Ralstonia solanacearum), this protein is GTPase Der.